The sequence spans 353 residues: Nicotinate-nucleotide--dimethylbenzimidazole phosphoribosyltransferase (353 aa).

The active-site Proton acceptor is the E320.

It belongs to the CobT family.

The catalysed reaction is 5,6-dimethylbenzimidazole + nicotinate beta-D-ribonucleotide = alpha-ribazole 5'-phosphate + nicotinate + H(+). It functions in the pathway nucleoside biosynthesis; alpha-ribazole biosynthesis; alpha-ribazole from 5,6-dimethylbenzimidazole: step 1/2. Catalyzes the synthesis of alpha-ribazole-5'-phosphate from nicotinate mononucleotide (NAMN) and 5,6-dimethylbenzimidazole (DMB). The sequence is that of Nicotinate-nucleotide--dimethylbenzimidazole phosphoribosyltransferase from Syntrophotalea carbinolica (strain DSM 2380 / NBRC 103641 / GraBd1) (Pelobacter carbinolicus).